The sequence spans 138 residues: Ribosome-binding factor A (138 aa).

Belongs to the RbfA family. As to quaternary structure, monomer. Binds 30S ribosomal subunits, but not 50S ribosomal subunits or 70S ribosomes.

It localises to the cytoplasm. In terms of biological role, one of several proteins that assist in the late maturation steps of the functional core of the 30S ribosomal subunit. Associates with free 30S ribosomal subunits (but not with 30S subunits that are part of 70S ribosomes or polysomes). Required for efficient processing of 16S rRNA. May interact with the 5'-terminal helix region of 16S rRNA. In Paracoccus denitrificans (strain Pd 1222), this protein is Ribosome-binding factor A.